We begin with the raw amino-acid sequence, 150 residues long: Macrodomain Ter protein (150 aa).

It belongs to the MatP family. In terms of assembly, homodimer.

The protein resides in the cytoplasm. Functionally, required for spatial organization of the terminus region of the chromosome (Ter macrodomain) during the cell cycle. Prevents early segregation of duplicated Ter macrodomains during cell division. Binds specifically to matS, which is a 13 bp signature motif repeated within the Ter macrodomain. The sequence is that of Macrodomain Ter protein from Salmonella typhi.